Reading from the N-terminus, the 238-residue chain is Probable transcriptional regulatory protein YeeN (238 aa).

It belongs to the TACO1 family. YeeN subfamily.

The protein resides in the cytoplasm. The sequence is that of Probable transcriptional regulatory protein YeeN from Escherichia coli O157:H7.